The chain runs to 359 residues: S-geranylgeranyl-glutathione receptor P2RY8 (359 aa).

Over 1-19 (MQVPNSTGPDNATLQMLRN) the chain is Extracellular. Residues Asn5 and Asn11 are each glycosylated (N-linked (GlcNAc...) asparagine). The helical transmembrane segment at 20–40 (PAIAVALPVVYSLVAAVSIPG) threads the bilayer. At 41 to 57 (NLFSLWVLCRRMGPRSP) the chain is on the cytoplasmic side. Residues 58-78 (SVIFMINLSVTDLMLASVLPF) traverse the membrane as a helical segment. The Extracellular portion of the chain corresponds to 79-88 (QIYYHCNRHH). A helical membrane pass occupies residues 89 to 109 (WVFGVLLCNVVTVAFYANMYS). The Cytoplasmic segment spans residues 110-138 (SILTMTCISVERFLGVLYPLSSKRWRRRR). A helical transmembrane segment spans residues 139-159 (YAVAACAGTWLLLLTALSPLA). Topologically, residues 160–187 (RTDLTYPVHALGIITCFDVLKWTMLPSV) are extracellular. A helical membrane pass occupies residues 188 to 208 (AMWAVFLFTIFILLFLIPFVI). Topologically, residues 209 to 237 (TVACYTATILKLLRTEEAHGREQRRRAVG) are cytoplasmic. The helical transmembrane segment at 238 to 258 (LAAVVLLAFVTCFAPNNFVLL) threads the bilayer. Residues 259-275 (AHIVSRLFYGKSYYHVY) are Extracellular-facing. The chain crosses the membrane as a helical span at residues 276 to 296 (KLTLCLSCLNNCLDPFVYYFA). Residues 297–359 (SREFQLRLRE…PGLQRQESVF (63 aa)) lie on the Cytoplasmic side of the membrane. The segment at 329-359 (RTTSVRSEAGAHPEGMEGATRPGLQRQESVF) is disordered.

It belongs to the G-protein coupled receptor 1 family. In terms of tissue distribution, barely detectable in normal blood leukocytes. Weaker expression was seen in heart, kidney and lung. Not detected in brain. Expressed in B cells and follicular helper T cells in germinal centers (at protein level).

It localises to the cell membrane. Functionally, g protein-coupled receptor for S-geranylgeranyl-glutathione (GGG), an endogenous metabolite present in lymphoid tissues. Couples the binding of GGG to the activation of GNA13 and downstream repression of AKT activation in lymphocytes defining their positioning and growth within lymphoid organs. In lymphoid follicles, confines B cells and follicular helper T cells in germinal centers (GCs) in response to GGG local gradients established by GGT5 (via GGG catabolism) and ABCC1 (via extracellular transport) with lower concentrations of GGG found in the follicular dendritic cell network region around which germinal centers are formed. In the bone marrow, also in response to GGG gradients established by GGT5 and ABCC1, it restricts chemotactic transmigration of B cells, T cells and NK cells from blood vessels to the bone marrow parenchyma. Contributes to GNA13-dependent pathway that suppresses GC B cell growth. This is S-geranylgeranyl-glutathione receptor P2RY8 from Homo sapiens (Human).